A 243-amino-acid chain; its full sequence is MDGFDVSQAPPEYRAVEPIANIFVLGMGLGWLINYVGMIYQSFKDETYGMAIMPLCCNIAWEIVYSLIYPSKSLIEQGVFIAGLTINIGVMYAAIKFAPKEWSHAPLVMRNLSLIFFLATLGFLTGHLALAAEIGHSLAYSWGAVVCQLLLSVGGLCQLLCRGSTRGASYTLWLSRFLGSSCTVAFASLRWMYWPESFSWLNSPLVLWSLALFLTVDGSYGLCYWYVRQYELSLKEAEGRKSK.

3 consecutive transmembrane segments (helical) span residues 19-39, 48-68, and 78-98; these read IANIFVLGMGLGWLINYVGMI, YGMAIMPLCCNIAWEIVYSLI, and GVFIAGLTINIGVMYAAIKFA. Residue N111 is glycosylated (N-linked (GlcNAc...) asparagine). 4 helical membrane-spanning segments follow: residues 112–132, 137–157, 172–194, and 205–225; these read LSLIFFLATLGFLTGHLALAA, SLAYSWGAVVCQLLLSVGGLC, LWLSRFLGSSCTVAFASLRWMYW, and LVLWSLALFLTVDGSYGLCYW.

Belongs to the paxB family.

It is found in the membrane. It participates in secondary metabolite biosynthesis. Functionally, terpene cyclase; part of the gene cluster that mediates the biosynthesis of the indole diterpenes penitrems. The geranylgeranyl diphosphate (GGPP) synthase penG catalyzes the first step in penitrem biosynthesis via conversion of farnesyl pyrophosphate and isopentyl pyrophosphate into geranylgeranyl pyrophosphate (GGPP). Condensation of indole-3-glycerol phosphate with GGPP by the prenyl transferase penC then forms 3-geranylgeranylindole (3-GGI). Epoxidation by the FAD-dependent monooxygenase penM leads to a epoxidized-GGI that is substrate of the terpene cyclase penB for cyclization to yield paspaline. Paspaline is subsequently converted to 13-desoxypaxilline by the cytochrome P450 monooxygenase penP, the latter being then converted to paxilline by the cytochrome P450 monooxygenase penQ. Paxilline is converted to beta-paxitriol via C-10 ketoreduction by the short-chain dehydrogenase PC-15 which can be monoprenylated at the C-20 by the indole diterpene prenyltransferase penD. A two-step elimination (acetylation and elimination) process performed by the O-acetyltransferase PC-16 and the P.simplicissimum ptmI-ortholog not yet identified in P.crustosum, leads to the production of the prenylated form of penijanthine. The FAD-linked oxidoreductase ptmO then converts the prenylated form of penijanthine into PC-M5 which is in turn transformed into PC-M4 by the aromatic dimethylallyltransferase PC-22. A series of oxidation steps involving 4 cytochrome P450 monooxygenases (PC-21, PC-05, PC-23, PC-20) and a FAD-dependent monooxygenase (PC-14) are required for the transformation of PC-M4 to penitrems A and E. Synthesis of these final products is proposed to proceed via penitrems D and C (PC-21, PC-05, PC-14) and penitrems B and F (PC-21, PC-05, PC-14, PC-23). The protein is Terpene cyclase penB (penB) of Penicillium crustosum (Blue mold fungus).